We begin with the raw amino-acid sequence, 657 residues long: Probable alpha-galactosidase D (657 aa).

A signal peptide spans 1–16; that stretch reads MLPKIFYLSLLPAALG. Residues N47 and N91 are each glycosylated (N-linked (GlcNAc...) asparagine). Residues C124 and C157 are joined by a disulfide bond. The active-site Nucleophile is D155. N-linked (GlcNAc...) asparagine glycans are attached at residues N182 and N191. 200–204 is a substrate binding site; it reads EWGID. D222 acts as the Proton donor in catalysis. Residues N291, N438, N460, N505, N539, N543, and N582 are each glycosylated (N-linked (GlcNAc...) asparagine).

This sequence belongs to the glycosyl hydrolase 27 family.

It localises to the secreted. The enzyme catalyses Hydrolysis of terminal, non-reducing alpha-D-galactose residues in alpha-D-galactosides, including galactose oligosaccharides, galactomannans and galactolipids.. In terms of biological role, hydrolyzes a variety of simple alpha-D-galactoside as well as more complex molecules such as oligosaccharides and polysaccharides. This Aspergillus oryzae (strain ATCC 42149 / RIB 40) (Yellow koji mold) protein is Probable alpha-galactosidase D (aglD).